Reading from the N-terminus, the 404-residue chain is Glycosylated lysosomal membrane protein B (404 aa).

An N-terminal signal peptide occupies residues 1–24 (MSCTRGWRLILLGLLCVGLLGTRG). The Lumenal portion of the chain corresponds to 25-364 (QDESRKVSVQ…YGDPPRDSFS (340 aa)). N-linked (GlcNAc...) asparagine glycans are attached at residues asparagine 85, asparagine 124, asparagine 128, asparagine 142, asparagine 152, asparagine 156, asparagine 163, asparagine 168, asparagine 178, asparagine 189, asparagine 205, asparagine 221, asparagine 266, asparagine 303, and asparagine 330. The helical transmembrane segment at 365 to 385 (ILVICIMAVALGTPLLLLIIG) threads the bilayer. The Cytoplasmic portion of the chain corresponds to 386–404 (TVLVTAVRHKVYPNYQPIN). The Lysosomal targeting motif motif lies at 400–404 (YQPIN).

The protein belongs to the GLMP family. Interacts (via lumenal domain) with lysosomal protein MFSD1; the interaction starts while both proteins are still in the endoplasmic reticulum and is required for stabilization of MFSD1 in lysosomes but has no direct effect on its targeting to lysosomes or transporter activity.

The protein localises to the lysosome membrane. Functionally, required to protect lysosomal transporter MFSD1 from lysosomal proteolysis and for MFSD1 lysosomal localization. The polypeptide is Glycosylated lysosomal membrane protein B (glmp-b) (Xenopus laevis (African clawed frog)).